The chain runs to 497 residues: MAAATVNPLMSTLKSDSSLQVALHPLPILEISDYITRSYLRGYKGAIVGALIGQQNGRQITIEHSFSVKTEHTGQNYKVDSEWFTARLDQMKAVHKDRALDFVGWYTLVPKSGPTDAHLPIHSYFYSQNESAVLLGFHIHEILNPVAGDPLPLTIYESNLEIVDGTEASTVEVEGEDREMKDVTAEPSRSIKFRELPYTTETGEAEMIALEFVREGGSANVTTTATNITATEDEGSDKPLMKKVVDTNKGSKRRAVSSDDAAAEAPTTSSAAKGTATDKNRDANLTKAELDYMSALQAKYNAVQMMKKRLDTVISYLQRLPPDYLSSGDASSQQQQQQQQQQQTEGLDQPQYTVPSNKILRQIQALVTNVQLVMSNSTSGQGQGQGERDTDLGALEKELLKETNDVKLVELIADLMSSVKDMKEVGKKFHVVETAKNSKRREQASHGGGERFNPHHPYPGGGGGSSMMREHAGLVGEGSASGSGGSGPAGDLARFDH.

The 142-residue stretch at 21-162 (VALHPLPILE…LTIYESNLEI (142 aa)) folds into the MPN domain. 3 disordered regions span residues 230–282 (ATED…KNRD), 324–350 (YLSS…LDQP), and 435–497 (AKNS…RFDH). The span at 236-246 (SDKPLMKKVVD) shows a compositional bias: basic and acidic residues. 2 stretches are compositionally biased toward low complexity: residues 258–272 (SDDA…SSAA) and 333–343 (QQQQQQQQQQQ). Over residues 440–453 (RREQASHGGGERFN) the composition is skewed to basic and acidic residues. The span at 475-488 (VGEGSASGSGGSGP) shows a compositional bias: gly residues.

This sequence belongs to the peptidase M67A family. CSN6 subfamily. In terms of assembly, component of the COP9 signalosome (CSN) complex.

It is found in the cytoplasm. It localises to the nucleus. Component of the COP9 signalosome (CSN) complex that acts as an regulator of the ubiquitin (Ubl) conjugation pathway by mediating the deneddylation of the cullin subunit of SCF-type E3 ubiquitin-protein ligase complexes. The CSN complex is involved in the regulation of the circadian clock through its control of the stability of the SCF(FWD1) complex. The sequence is that of COP9 signalosome complex subunit 6 (csn-6) from Neurospora crassa (strain ATCC 24698 / 74-OR23-1A / CBS 708.71 / DSM 1257 / FGSC 987).